Consider the following 303-residue polypeptide: Proteasome subunit beta (303 aa).

A propeptide spans 1-64 (MTWPDRDTSA…VTPSDAVPHG (64 aa)) (removed in mature form; by autocatalysis). The active-site Nucleophile is Thr-65.

The protein belongs to the peptidase T1B family. In terms of assembly, the 20S proteasome core is composed of 14 alpha and 14 beta subunits that assemble into four stacked heptameric rings, resulting in a barrel-shaped structure. The two inner rings, each composed of seven catalytic beta subunits, are sandwiched by two outer rings, each composed of seven alpha subunits. The catalytic chamber with the active sites is on the inside of the barrel. Has a gated structure, the ends of the cylinder being occluded by the N-termini of the alpha-subunits. Is capped by the proteasome-associated ATPase, ARC.

It localises to the cytoplasm. The catalysed reaction is Cleavage of peptide bonds with very broad specificity.. It functions in the pathway protein degradation; proteasomal Pup-dependent pathway. Its activity is regulated as follows. The formation of the proteasomal ATPase ARC-20S proteasome complex, likely via the docking of the C-termini of ARC into the intersubunit pockets in the alpha-rings, may trigger opening of the gate for substrate entry. Interconversion between the open-gate and close-gate conformations leads to a dynamic regulation of the 20S proteasome proteolysis activity. Its function is as follows. Component of the proteasome core, a large protease complex with broad specificity involved in protein degradation. In Mycolicibacterium gilvum (strain PYR-GCK) (Mycobacterium gilvum (strain PYR-GCK)), this protein is Proteasome subunit beta.